Here is a 146-residue protein sequence, read N- to C-terminus: Hemoglobin subunit beta (146 aa).

Val-1 is subject to N-acetylvaline. In terms of domain architecture, Globin spans 2-146; that stretch reads HLTADEKSAV…VATALGHKYH (145 aa). A Phosphothreonine modification is found at Thr-12. Ser-44 is subject to Phosphoserine. Position 59 is an N6-acetyllysine (Lys-59). Residue His-63 participates in heme b binding. At Lys-82 the chain carries N6-acetyllysine. His-92 contributes to the heme b binding site. Cys-93 carries the post-translational modification S-nitrosocysteine. At Lys-144 the chain carries N6-acetyllysine.

The protein belongs to the globin family. Heterotetramer of two alpha chains and two beta chains. In terms of tissue distribution, red blood cells.

Functionally, involved in oxygen transport from the lung to the various peripheral tissues. In Antrozous pallidus (Pallid bat), this protein is Hemoglobin subunit beta (HBB).